We begin with the raw amino-acid sequence, 217 residues long: Peptide methionine sulfoxide reductase MsrA (217 aa).

C56 is an active-site residue.

This sequence belongs to the MsrA Met sulfoxide reductase family.

The enzyme catalyses L-methionyl-[protein] + [thioredoxin]-disulfide + H2O = L-methionyl-(S)-S-oxide-[protein] + [thioredoxin]-dithiol. The catalysed reaction is [thioredoxin]-disulfide + L-methionine + H2O = L-methionine (S)-S-oxide + [thioredoxin]-dithiol. Has an important function as a repair enzyme for proteins that have been inactivated by oxidation. Catalyzes the reversible oxidation-reduction of methionine sulfoxide in proteins to methionine. This Corynebacterium glutamicum (strain ATCC 13032 / DSM 20300 / JCM 1318 / BCRC 11384 / CCUG 27702 / LMG 3730 / NBRC 12168 / NCIMB 10025 / NRRL B-2784 / 534) protein is Peptide methionine sulfoxide reductase MsrA.